Consider the following 226-residue polypeptide: Enolase-phosphatase E1 (226 aa).

This sequence belongs to the HAD-like hydrolase superfamily. MasA/MtnC family. As to quaternary structure, monomer. The cofactor is Mg(2+).

It catalyses the reaction 5-methylsulfanyl-2,3-dioxopentyl phosphate + H2O = 1,2-dihydroxy-5-(methylsulfanyl)pent-1-en-3-one + phosphate. It functions in the pathway amino-acid biosynthesis; L-methionine biosynthesis via salvage pathway; L-methionine from S-methyl-5-thio-alpha-D-ribose 1-phosphate: step 3/6. The protein operates within amino-acid biosynthesis; L-methionine biosynthesis via salvage pathway; L-methionine from S-methyl-5-thio-alpha-D-ribose 1-phosphate: step 4/6. Functionally, bifunctional enzyme that catalyzes the enolization of 2,3-diketo-5-methylthiopentyl-1-phosphate (DK-MTP-1-P) into the intermediate 2-hydroxy-3-keto-5-methylthiopentenyl-1-phosphate (HK-MTPenyl-1-P), which is then dephosphorylated to form the acireductone 1,2-dihydroxy-3-keto-5-methylthiopentene (DHK-MTPene). The protein is Enolase-phosphatase E1 of Shewanella baltica (strain OS155 / ATCC BAA-1091).